We begin with the raw amino-acid sequence, 176 residues long: NAD(P)H-quinone oxidoreductase subunit 6, chloroplastic (176 aa).

A run of 5 helical transmembrane segments spans residues phenylalanine 10–threonine 30, proline 32–leucine 52, alanine 61–methionine 81, leucine 92–isoleucine 112, and phenylalanine 152–alanine 172.

The protein belongs to the complex I subunit 6 family. In terms of assembly, NDH is composed of at least 16 different subunits, 5 of which are encoded in the nucleus.

It localises to the plastid. It is found in the chloroplast thylakoid membrane. It catalyses the reaction a plastoquinone + NADH + (n+1) H(+)(in) = a plastoquinol + NAD(+) + n H(+)(out). The catalysed reaction is a plastoquinone + NADPH + (n+1) H(+)(in) = a plastoquinol + NADP(+) + n H(+)(out). NDH shuttles electrons from NAD(P)H:plastoquinone, via FMN and iron-sulfur (Fe-S) centers, to quinones in the photosynthetic chain and possibly in a chloroplast respiratory chain. The immediate electron acceptor for the enzyme in this species is believed to be plastoquinone. Couples the redox reaction to proton translocation, and thus conserves the redox energy in a proton gradient. This Gossypium hirsutum (Upland cotton) protein is NAD(P)H-quinone oxidoreductase subunit 6, chloroplastic (ndhG).